The sequence spans 2359 residues: Pre-mRNA-processing-splicing factor 8B (2359 aa).

The tract at residues 1 to 50 (MWNIDGTSLAPPGTDGSRMQTPSHPADHPSYTAPSNRNTPTVPTPEDAEA) is disordered. Polar residues predominate over residues 32-41 (TAPSNRNTPT). The MPN domain maps to 2129 to 2260 (TYIMPKNILK…LTSYKLTQAG (132 aa)).

The protein localises to the nucleus. Functionally, functions as a scaffold that mediates the ordered assembly of spliceosomal proteins and snRNAs. Required for the assembly of the U4/U6-U5 tri-snRNP complex. The protein is Pre-mRNA-processing-splicing factor 8B of Arabidopsis thaliana (Mouse-ear cress).